The sequence spans 429 residues: UDP-N-acetylglucosamine 1-carboxyvinyltransferase (429 aa).

22-23 (KN) is a binding site for phosphoenolpyruvate. Arg102 contacts UDP-N-acetyl-alpha-D-glucosamine. The Proton donor role is filled by Cys126. Cys126 carries the 2-(S-cysteinyl)pyruvic acid O-phosphothioketal modification. UDP-N-acetyl-alpha-D-glucosamine contacts are provided by residues 131–135 (RPVDL), Asp316, and Ile338.

It belongs to the EPSP synthase family. MurA subfamily.

The protein resides in the cytoplasm. It catalyses the reaction phosphoenolpyruvate + UDP-N-acetyl-alpha-D-glucosamine = UDP-N-acetyl-3-O-(1-carboxyvinyl)-alpha-D-glucosamine + phosphate. The protein operates within cell wall biogenesis; peptidoglycan biosynthesis. Cell wall formation. Adds enolpyruvyl to UDP-N-acetylglucosamine. In Rhodopseudomonas palustris (strain HaA2), this protein is UDP-N-acetylglucosamine 1-carboxyvinyltransferase.